The sequence spans 309 residues: Methionyl-tRNA formyltransferase (309 aa).

112–115 provides a ligand contact to (6S)-5,6,7,8-tetrahydrofolate; sequence SLLP.

Belongs to the Fmt family.

It catalyses the reaction L-methionyl-tRNA(fMet) + (6R)-10-formyltetrahydrofolate = N-formyl-L-methionyl-tRNA(fMet) + (6S)-5,6,7,8-tetrahydrofolate + H(+). In terms of biological role, attaches a formyl group to the free amino group of methionyl-tRNA(fMet). The formyl group appears to play a dual role in the initiator identity of N-formylmethionyl-tRNA by promoting its recognition by IF2 and preventing the misappropriation of this tRNA by the elongation apparatus. This chain is Methionyl-tRNA formyltransferase, found in Bartonella tribocorum (strain CIP 105476 / IBS 506).